The chain runs to 228 residues: 2-C-methyl-D-erythritol 4-phosphate cytidylyltransferase (228 aa).

Belongs to the IspD/TarI cytidylyltransferase family. IspD subfamily.

It carries out the reaction 2-C-methyl-D-erythritol 4-phosphate + CTP + H(+) = 4-CDP-2-C-methyl-D-erythritol + diphosphate. It participates in isoprenoid biosynthesis; isopentenyl diphosphate biosynthesis via DXP pathway; isopentenyl diphosphate from 1-deoxy-D-xylulose 5-phosphate: step 2/6. Catalyzes the formation of 4-diphosphocytidyl-2-C-methyl-D-erythritol from CTP and 2-C-methyl-D-erythritol 4-phosphate (MEP). In Nostoc sp. (strain PCC 7120 / SAG 25.82 / UTEX 2576), this protein is 2-C-methyl-D-erythritol 4-phosphate cytidylyltransferase.